A 90-amino-acid chain; its full sequence is Probable Fe(2+)-trafficking protein (90 aa).

This sequence belongs to the Fe(2+)-trafficking protein family.

Functionally, could be a mediator in iron transactions between iron acquisition and iron-requiring processes, such as synthesis and/or repair of Fe-S clusters in biosynthetic enzymes. The polypeptide is Probable Fe(2+)-trafficking protein (Thioalkalivibrio sulfidiphilus (strain HL-EbGR7)).